We begin with the raw amino-acid sequence, 268 residues long: Indole-3-glycerol phosphate synthase (268 aa).

It belongs to the TrpC family.

It catalyses the reaction 1-(2-carboxyphenylamino)-1-deoxy-D-ribulose 5-phosphate + H(+) = (1S,2R)-1-C-(indol-3-yl)glycerol 3-phosphate + CO2 + H2O. The protein operates within amino-acid biosynthesis; L-tryptophan biosynthesis; L-tryptophan from chorismate: step 4/5. The protein is Indole-3-glycerol phosphate synthase of Micrococcus luteus (strain ATCC 4698 / DSM 20030 / JCM 1464 / CCM 169 / CCUG 5858 / IAM 1056 / NBRC 3333 / NCIMB 9278 / NCTC 2665 / VKM Ac-2230) (Micrococcus lysodeikticus).